The primary structure comprises 288 residues: Bifunctional protein FolD (288 aa).

NADP(+) contacts are provided by residues glycine 166–serine 168 and isoleucine 232.

Belongs to the tetrahydrofolate dehydrogenase/cyclohydrolase family. In terms of assembly, homodimer.

It catalyses the reaction (6R)-5,10-methylene-5,6,7,8-tetrahydrofolate + NADP(+) = (6R)-5,10-methenyltetrahydrofolate + NADPH. The enzyme catalyses (6R)-5,10-methenyltetrahydrofolate + H2O = (6R)-10-formyltetrahydrofolate + H(+). It participates in one-carbon metabolism; tetrahydrofolate interconversion. Catalyzes the oxidation of 5,10-methylenetetrahydrofolate to 5,10-methenyltetrahydrofolate and then the hydrolysis of 5,10-methenyltetrahydrofolate to 10-formyltetrahydrofolate. This Salmonella arizonae (strain ATCC BAA-731 / CDC346-86 / RSK2980) protein is Bifunctional protein FolD.